The primary structure comprises 274 residues: Energy-coupling factor transporter ATP-binding protein EcfA (274 aa).

Positions 2-235 constitute an ABC transporter domain; sequence IRLENVSYNY…LSLRYLGLTP (234 aa). An ATP-binding site is contributed by 35–42; it reads GKNGSGKS.

Belongs to the ABC transporter superfamily. Energy-coupling factor EcfA family. In terms of assembly, forms a stable energy-coupling factor (ECF) transporter complex composed of 2 membrane-embedded substrate-binding proteins (S component), 2 ATP-binding proteins (A component) and 2 transmembrane proteins (T component).

It is found in the cell membrane. Its function is as follows. ATP-binding (A) component of a common energy-coupling factor (ECF) ABC-transporter complex. Unlike classic ABC transporters this ECF transporter provides the energy necessary to transport a number of different substrates. The protein is Energy-coupling factor transporter ATP-binding protein EcfA of Methanosarcina acetivorans (strain ATCC 35395 / DSM 2834 / JCM 12185 / C2A).